The primary structure comprises 1120 residues: Probable leucine-rich repeat receptor-like protein kinase At1g35710 (1120 aa).

The N-terminal stretch at 1 to 29 is a signal peptide; that stretch reads MGFAEKNLYDFRFLLFISIILSCSISASA. Residues 30 to 783 are Extracellular-facing; sequence TIAEANALLK…RELKKPKKNG (754 aa). N-linked (GlcNAc...) asparagine glycans are attached at residues Asn-46, Asn-60, Asn-83, and Asn-124. LRR repeat units lie at residues 78 to 100, 103 to 125, 127 to 150, 151 to 172, 175 to 198, 199 to 221, 223 to 246, 247 to 269, 271 to 294, 295 to 317, 319 to 342, 343 to 365, 367 to 389, 391 to 412, 415 to 437, 439 to 461, 463 to 484, 487 to 510, 535 to 557, 559 to 581, 583 to 605, 607 to 630, 631 to 652, 655 to 677, 678 to 701, 702 to 723, and 726 to 748; these read SIEE…PFIS, NLAY…FGNL, KLIY…GNLK, NLTV…ELGN, SMTD…GNLK, NLMV…LGNM, NLMV…IGNM, SMTN…GNLK, NLTL…LGNI, SMID…GNLK, NLTI…LGNM, SMID…FGNL, NLTY…ELGN, SMIN…FGNF, KLES…VANS, HLTT…TVCK, KLQN…RDCK, DLNF…WEKS, KLGA…IWNM, QLVE…IGNL, NLSR…SFLT, NLES…TFDS, KLHD…SKLT, QLTQ…SSLQ, SLDK…TFEG, and ALTN…PTFR. N-linked (GlcNAc...) asparagine glycosylation is present at Asn-151. Residue Asn-295 is glycosylated (N-linked (GlcNAc...) asparagine). N-linked (GlcNAc...) asparagine glycosylation is present at Asn-343. Asn-391, Asn-436, Asn-460, Asn-473, and Asn-490 each carry an N-linked (GlcNAc...) asparagine glycan. Residues Asn-569, Asn-580, Asn-604, Asn-607, Asn-641, and Asn-660 are each glycosylated (N-linked (GlcNAc...) asparagine). An N-linked (GlcNAc...) asparagine glycan is attached at Asn-712. A helical transmembrane segment spans residues 784–804; sequence NLVVWILVPILGVLVILSICA. Over 805–1120 the chain is Cytoplasmic; it reads NTFTYCIRKR…TMLSISTTFS (316 aa). At Thr-848 the chain carries Phosphothreonine. Residues 851 to 1120 enclose the Protein kinase domain; sequence FDPTHLIGTG…TMLSISTTFS (270 aa). ATP-binding positions include 857–865 and Lys-878; that span reads IGTGGYSKV. Tyr-929 and Tyr-968 each carry phosphotyrosine. The active-site Proton acceptor is the Asp-981. Position 1014 is a phosphoserine (Ser-1014). Phosphotyrosine occurs at positions 1022 and 1029. Thr-1030 carries the post-translational modification Phosphothreonine.

This sequence belongs to the protein kinase superfamily. Ser/Thr protein kinase family.

The protein localises to the membrane. It carries out the reaction L-seryl-[protein] + ATP = O-phospho-L-seryl-[protein] + ADP + H(+). The catalysed reaction is L-threonyl-[protein] + ATP = O-phospho-L-threonyl-[protein] + ADP + H(+). The protein is Probable leucine-rich repeat receptor-like protein kinase At1g35710 of Arabidopsis thaliana (Mouse-ear cress).